The following is a 185-amino-acid chain: Ribosome-recycling factor (185 aa).

Belongs to the RRF family.

Its subcellular location is the cytoplasm. Responsible for the release of ribosomes from messenger RNA at the termination of protein biosynthesis. May increase the efficiency of translation by recycling ribosomes from one round of translation to another. The polypeptide is Ribosome-recycling factor (Idiomarina loihiensis (strain ATCC BAA-735 / DSM 15497 / L2-TR)).